A 193-amino-acid chain; its full sequence is MSDSAPTNPTPTNPAPEESASAVATLEPGPVSQWLNTQGFDHDVLDPDHVGVEQIGVESAVLPIIVAAIKSHGFDYLQCQGGYDEGPGERLVCFYHFIAMAEQVEAMTAGRPHELREVRLKVFLSREGTPSLPSIYGLFRGADWQERETFDMYGIEFEGHPHPKRLLMPEDWKGWPLRKDYVQPDFYEMQDAF.

A disordered region spans residues 1 to 21 (MSDSAPTNPTPTNPAPEESAS).

Belongs to the complex I 30 kDa subunit family. In terms of assembly, NDH-1 can be composed of about 15 different subunits; different subcomplexes with different compositions have been identified which probably have different functions.

Its subcellular location is the cellular thylakoid membrane. The catalysed reaction is a plastoquinone + NADH + (n+1) H(+)(in) = a plastoquinol + NAD(+) + n H(+)(out). It carries out the reaction a plastoquinone + NADPH + (n+1) H(+)(in) = a plastoquinol + NADP(+) + n H(+)(out). In terms of biological role, NDH-1 shuttles electrons from an unknown electron donor, via FMN and iron-sulfur (Fe-S) centers, to quinones in the respiratory and/or the photosynthetic chain. The immediate electron acceptor for the enzyme in this species is believed to be plastoquinone. Couples the redox reaction to proton translocation, and thus conserves the redox energy in a proton gradient. Cyanobacterial NDH-1 also plays a role in inorganic carbon-concentration. The sequence is that of NAD(P)H-quinone oxidoreductase subunit J from Synechococcus sp. (strain CC9902).